The following is a 57-amino-acid chain: Large ribosomal subunit protein bL32 (57 aa).

Residues 1 to 19 show a composition bias toward basic residues; it reads MATPKRRMSRANTRSRRAQ. The interval 1–20 is disordered; sequence MATPKRRMSRANTRSRRAQW.

The protein belongs to the bacterial ribosomal protein bL32 family.

The sequence is that of Large ribosomal subunit protein bL32 from Mycobacterium leprae (strain Br4923).